The chain runs to 73 residues: U-scoloptoxin(15)-Sm2a (73 aa).

The N-terminal stretch at 1–20 (MKFYIVFCLFVVLLINFAAA) is a signal peptide. Disulfide bonds link Cys-39/Cys-66 and Cys-43/Cys-68.

This sequence belongs to the scoloptoxin-15 family. Expressed by the venom gland.

The protein resides in the secreted. Its function is as follows. Activity unknown, even that a lot of targets (Kv, Nav, Cav) have been tested and activities on insects and mice have been tested. This chain is U-scoloptoxin(15)-Sm2a, found in Scolopendra morsitans (Tanzanian blue ringleg centipede).